The primary structure comprises 697 residues: Phosphate acetyltransferase (697 aa).

Residues 366 to 697 (MFEHKLLEQA…QSPTEKASAQ (332 aa)) are phosphate acetyltransferase.

It in the N-terminal section; belongs to the CobB/CobQ family. In the C-terminal section; belongs to the phosphate acetyltransferase and butyryltransferase family. As to quaternary structure, homohexamer.

Its subcellular location is the cytoplasm. It carries out the reaction acetyl-CoA + phosphate = acetyl phosphate + CoA. Its pathway is metabolic intermediate biosynthesis; acetyl-CoA biosynthesis; acetyl-CoA from acetate: step 2/2. Its function is as follows. Involved in acetate metabolism. The chain is Phosphate acetyltransferase (pta) from Streptomyces coelicolor (strain ATCC BAA-471 / A3(2) / M145).